The primary structure comprises 203 residues: Ribosomal RNA large subunit methyltransferase E (203 aa).

The S-adenosyl-L-methionine site is built by Gly-59, Trp-61, Asp-79, Asn-95, and Asp-118. Lys-158 (proton acceptor) is an active-site residue.

The protein belongs to the class I-like SAM-binding methyltransferase superfamily. RNA methyltransferase RlmE family.

It is found in the cytoplasm. The catalysed reaction is uridine(2552) in 23S rRNA + S-adenosyl-L-methionine = 2'-O-methyluridine(2552) in 23S rRNA + S-adenosyl-L-homocysteine + H(+). Functionally, specifically methylates the uridine in position 2552 of 23S rRNA at the 2'-O position of the ribose in the fully assembled 50S ribosomal subunit. The sequence is that of Ribosomal RNA large subunit methyltransferase E from Wigglesworthia glossinidia brevipalpis.